A 456-amino-acid polypeptide reads, in one-letter code: Bifunctional protein GlmU (456 aa).

A pyrophosphorylase region spans residues 1–229; sequence MLNSAMSVVI…ISETDGVNNR (229 aa). Residues 11–14, lysine 25, glutamine 76, 81–82, 103–105, glycine 140, glutamate 154, asparagine 169, and asparagine 227 each bind UDP-N-acetyl-alpha-D-glucosamine; these read LAAG, GT, and YGD. Aspartate 105 serves as a coordination point for Mg(2+). Asparagine 227 is a binding site for Mg(2+). Residues 230–250 form a linker region; it reads LQLSRLERIYQAEQAEKLLLS. Residues 251-456 form an N-acetyltransferase region; the sequence is GVMLRDPARF…QGWQRPVKKK (206 aa). UDP-N-acetyl-alpha-D-glucosamine-binding residues include arginine 333 and lysine 351. Residue histidine 363 is the Proton acceptor of the active site. 2 residues coordinate UDP-N-acetyl-alpha-D-glucosamine: tyrosine 366 and asparagine 377. Residues alanine 380, 386 to 387, serine 405, alanine 423, and arginine 440 contribute to the acetyl-CoA site; that span reads NY.

The protein in the N-terminal section; belongs to the N-acetylglucosamine-1-phosphate uridyltransferase family. In the C-terminal section; belongs to the transferase hexapeptide repeat family. As to quaternary structure, homotrimer. Requires Mg(2+) as cofactor.

Its subcellular location is the cytoplasm. The catalysed reaction is alpha-D-glucosamine 1-phosphate + acetyl-CoA = N-acetyl-alpha-D-glucosamine 1-phosphate + CoA + H(+). The enzyme catalyses N-acetyl-alpha-D-glucosamine 1-phosphate + UTP + H(+) = UDP-N-acetyl-alpha-D-glucosamine + diphosphate. Its pathway is nucleotide-sugar biosynthesis; UDP-N-acetyl-alpha-D-glucosamine biosynthesis; N-acetyl-alpha-D-glucosamine 1-phosphate from alpha-D-glucosamine 6-phosphate (route II): step 2/2. The protein operates within nucleotide-sugar biosynthesis; UDP-N-acetyl-alpha-D-glucosamine biosynthesis; UDP-N-acetyl-alpha-D-glucosamine from N-acetyl-alpha-D-glucosamine 1-phosphate: step 1/1. It participates in bacterial outer membrane biogenesis; LPS lipid A biosynthesis. Functionally, catalyzes the last two sequential reactions in the de novo biosynthetic pathway for UDP-N-acetylglucosamine (UDP-GlcNAc). The C-terminal domain catalyzes the transfer of acetyl group from acetyl coenzyme A to glucosamine-1-phosphate (GlcN-1-P) to produce N-acetylglucosamine-1-phosphate (GlcNAc-1-P), which is converted into UDP-GlcNAc by the transfer of uridine 5-monophosphate (from uridine 5-triphosphate), a reaction catalyzed by the N-terminal domain. This Salmonella heidelberg (strain SL476) protein is Bifunctional protein GlmU.